The primary structure comprises 398 residues: Succinate--CoA ligase [ADP-forming] subunit beta (398 aa).

Positions 9 to 254 (KALLGEFGVP…ETEEDAKEIE (246 aa)) constitute an ATP-grasp domain. Residues lysine 46, 53 to 55 (GRG), glutamate 109, serine 112, and glutamate 117 contribute to the ATP site. Asparagine 209 and aspartate 223 together coordinate Mg(2+). Residues asparagine 274 and 331–333 (GIM) each bind substrate.

It belongs to the succinate/malate CoA ligase beta subunit family. As to quaternary structure, heterotetramer of two alpha and two beta subunits. It depends on Mg(2+) as a cofactor.

The catalysed reaction is succinate + ATP + CoA = succinyl-CoA + ADP + phosphate. It carries out the reaction GTP + succinate + CoA = succinyl-CoA + GDP + phosphate. The protein operates within carbohydrate metabolism; tricarboxylic acid cycle; succinate from succinyl-CoA (ligase route): step 1/1. Functionally, succinyl-CoA synthetase functions in the citric acid cycle (TCA), coupling the hydrolysis of succinyl-CoA to the synthesis of either ATP or GTP and thus represents the only step of substrate-level phosphorylation in the TCA. The beta subunit provides nucleotide specificity of the enzyme and binds the substrate succinate, while the binding sites for coenzyme A and phosphate are found in the alpha subunit. The sequence is that of Succinate--CoA ligase [ADP-forming] subunit beta from Bradyrhizobium diazoefficiens (strain JCM 10833 / BCRC 13528 / IAM 13628 / NBRC 14792 / USDA 110).